A 335-amino-acid chain; its full sequence is tRNA N6-adenosine threonylcarbamoyltransferase (335 aa).

The Fe cation site is built by H111 and H115. Substrate contacts are provided by residues 133-137 (LISGG), D166, G179, and N276. D301 contacts Fe cation.

Belongs to the KAE1 / TsaD family. The cofactor is Fe(2+).

The protein resides in the cytoplasm. It catalyses the reaction L-threonylcarbamoyladenylate + adenosine(37) in tRNA = N(6)-L-threonylcarbamoyladenosine(37) in tRNA + AMP + H(+). Functionally, required for the formation of a threonylcarbamoyl group on adenosine at position 37 (t(6)A37) in tRNAs that read codons beginning with adenine. Is involved in the transfer of the threonylcarbamoyl moiety of threonylcarbamoyl-AMP (TC-AMP) to the N6 group of A37, together with TsaE and TsaB. TsaD likely plays a direct catalytic role in this reaction. This Wolbachia pipientis wMel protein is tRNA N6-adenosine threonylcarbamoyltransferase.